Reading from the N-terminus, the 700-residue chain is Tectonic-2 (700 aa).

An N-terminal signal peptide occupies residues 1-25 (MGSLSPLSFLWGLLLLQGVLRPLRG). Over 26-665 (DPVFIPPFIR…YYQGEPRPQC (640 aa)) the chain is Extracellular. 5 N-linked (GlcNAc...) asparagine glycosylation sites follow: N76, N82, N146, N156, and N389. Residues 666–682 (VAKGLMLLSLLMLAILL) form a helical membrane-spanning segment. Residues 683–700 (RHPWVGMCKAWSSASIQH) lie on the Cytoplasmic side of the membrane.

The protein belongs to the tectonic family. Part of the tectonic-like complex (also named B9 complex).

The protein localises to the membrane. It is found in the cytoplasm. It localises to the cytoskeleton. The protein resides in the cilium basal body. In terms of biological role, component of the tectonic-like complex, a complex localized at the transition zone of primary cilia and acting as a barrier that prevents diffusion of transmembrane proteins between the cilia and plasma membranes. Required for hedgehog signaling transduction. In Rattus norvegicus (Rat), this protein is Tectonic-2 (Tctn2).